Here is a 497-residue protein sequence, read N- to C-terminus: UDP-N-acetylmuramoyl-L-alanyl-D-glutamate--2,6-diaminopimelate ligase (497 aa).

Ser-29 is a binding site for UDP-N-acetyl-alpha-D-muramoyl-L-alanyl-D-glutamate. 116–122 (GTNGKTT) serves as a coordination point for ATP. UDP-N-acetyl-alpha-D-muramoyl-L-alanyl-D-glutamate-binding positions include Asn-157, 158-159 (TT), Ser-185, Gln-191, and Arg-193. Lys-225 is subject to N6-carboxylysine. Meso-2,6-diaminopimelate-binding positions include Arg-392, 416 to 419 (DNPR), Gly-467, and Glu-471. The short motif at 416-419 (DNPR) is the Meso-diaminopimelate recognition motif element.

This sequence belongs to the MurCDEF family. MurE subfamily. Mg(2+) serves as cofactor. In terms of processing, carboxylation is probably crucial for Mg(2+) binding and, consequently, for the gamma-phosphate positioning of ATP.

Its subcellular location is the cytoplasm. It carries out the reaction UDP-N-acetyl-alpha-D-muramoyl-L-alanyl-D-glutamate + meso-2,6-diaminopimelate + ATP = UDP-N-acetyl-alpha-D-muramoyl-L-alanyl-gamma-D-glutamyl-meso-2,6-diaminopimelate + ADP + phosphate + H(+). It functions in the pathway cell wall biogenesis; peptidoglycan biosynthesis. Functionally, catalyzes the addition of meso-diaminopimelic acid to the nucleotide precursor UDP-N-acetylmuramoyl-L-alanyl-D-glutamate (UMAG) in the biosynthesis of bacterial cell-wall peptidoglycan. This Buchnera aphidicola subsp. Acyrthosiphon pisum (strain APS) (Acyrthosiphon pisum symbiotic bacterium) protein is UDP-N-acetylmuramoyl-L-alanyl-D-glutamate--2,6-diaminopimelate ligase.